The primary structure comprises 181 residues: Peptide deformylase (181 aa).

2 residues coordinate Fe cation: Cys99 and His141. The active site involves Glu142. His145 serves as a coordination point for Fe cation.

It belongs to the polypeptide deformylase family. Fe(2+) is required as a cofactor.

It catalyses the reaction N-terminal N-formyl-L-methionyl-[peptide] + H2O = N-terminal L-methionyl-[peptide] + formate. In terms of biological role, removes the formyl group from the N-terminal Met of newly synthesized proteins. Requires at least a dipeptide for an efficient rate of reaction. N-terminal L-methionine is a prerequisite for activity but the enzyme has broad specificity at other positions. This is Peptide deformylase from Chlamydia trachomatis serovar A (strain ATCC VR-571B / DSM 19440 / HAR-13).